Here is a 449-residue protein sequence, read N- to C-terminus: RNA binding protein fox-1 homolog 2 (449 aa).

Residues 1-21 (MAEGGQAQQQPPQLGPGAAAR) show a composition bias toward low complexity. A disordered region spans residues 1 to 186 (MAEGGQAQQQ…STPKRLHVSN (186 aa)). Polar residues-rich tracts occupy residues 77-86 (QGNQEPTTTP) and 118-138 (YAGQ…PHGE). The segment covering 139–176 (QSSNSPSNQNGSLTQTEGGAQTDGQQSQTQSSENSESK) has biased composition (low complexity). The region spanning 180–256 (KRLHVSNIPF…RKIEVNNATA (77 aa)) is the RRM domain. Residues R236, G241, Y268, and K273 each carry the omega-N-methylarginine modification. E285 and P317 each carry asymmetric dimethylarginine. Omega-N-methylarginine is present on residues L318, L323, A336, R340, and G341. 2 positions are modified to asymmetric dimethylarginine: R356 and R388. R440 and R445 each carry asymmetric dimethylarginine; alternate. Residues R440 and R445 each carry the omega-N-methylarginine; alternate modification.

Interacts with ER-alpha N-terminal activation domain. Interacts with RBPMS; the interaction allows cooperative assembly of stable cell-specific alternative splicing regulatory complexes. As to expression, detected in brain neurons (at protein level). Detected in heart, brain, embryo, lung, liver, kidney and ovary.

Its subcellular location is the nucleus. The protein resides in the cytoplasm. Functionally, RNA-binding protein that regulates alternative splicing events by binding to 5'-UGCAUGU-3' elements. Prevents binding of U2AF2 to the 3'-splice site. Regulates alternative splicing of tissue-specific exons and of differentially spliced exons during erythropoiesis. Seems to act as a coregulatory factor of ER-alpha. Together with RNA binding proteins RBPMS and MBNL1/2, activates vascular smooth muscle cells alternative splicing events. This Mus musculus (Mouse) protein is RNA binding protein fox-1 homolog 2 (Rbfox2).